Here is a 93-residue protein sequence, read N- to C-terminus: Small ribosomal subunit protein uS15c (93 aa).

This sequence belongs to the universal ribosomal protein uS15 family. Part of the 30S ribosomal subunit.

The protein localises to the plastid. It localises to the chloroplast. The sequence is that of Small ribosomal subunit protein uS15c (rps15) from Jasminum nudiflorum (Winter jasmine).